We begin with the raw amino-acid sequence, 470 residues long: FAD-dependent monooxygenase SAT7 (470 aa).

The chain crosses the membrane as a helical span at residues G28–V48. FAD-binding residues include E58, A71, and R143. Residues R227 and Y260 contribute to the active site. 2 residues coordinate FAD: D351 and A364.

It belongs to the paxM FAD-dependent monooxygenase family. Requires FAD as cofactor.

It localises to the membrane. The protein operates within mycotoxin biosynthesis. Functionally, FAD-dependent monooxygenase; part of the satratoxin SC1 cluster involved in the biosynthesis of satratoxins, trichothecene mycotoxins that are associated with human food poisonings. Satratoxins are suggested to be made by products of multiple gene clusters (SC1, SC2 and SC3) that encode 21 proteins in all, including polyketide synthases, acetyltransferases, and other enzymes expected to modify the trichothecene skeleton. SC1 encodes 10 proteins, SAT1 to SAT10. The largest are SAT8, which encodes a putative polyketide synthase (PKS) with a conventional non-reducing architecture, and SAT10, a putative protein containing four ankyrin repeats and thus may be involved in protein scaffolding. The putative short-chain reductase SAT3 may assist the PKS in some capacity. SAT6 contains a secretory lipase domain and acts probably as a trichothecene esterase. SAT5 encodes a putative acetyltransferase, and so, with SAT6, may affect endogenous protection from toxicity. The probable transcription factor SAT9 may regulate the expression of the SC1 cluster. SC2 encodes proteins SAT11 to SAT16, the largest of which encodes the putative reducing PKS SAT13. SAT11 is a cytochrome P450 monooxygenase, while SAT14 and SAT16 are probable acetyltransferases. The SC2 cluster may be regulated by the transcription factor SAT15. SC3 is a small cluster that encodes 5 proteins, SAT17 to SAT21. SAT21 is a putative MFS-type transporter which may have a role in exporting secondary metabolites. The four other proteins putatively encoded in SC3 include the taurine hydroxylase-like protein SAT17, the O-methyltransferase SAT18, the acetyltransferase SAT19, and the Cys6-type zinc finger SAT20, the latter being probably involved in regulation of SC3 expression. This is FAD-dependent monooxygenase SAT7 from Stachybotrys chartarum (strain CBS 109288 / IBT 7711) (Toxic black mold).